We begin with the raw amino-acid sequence, 494 residues long: ATP synthase subunit beta, chloroplastic (494 aa).

172-179 (GGAGVGKT) contacts ATP.

This sequence belongs to the ATPase alpha/beta chains family. F-type ATPases have 2 components, CF(1) - the catalytic core - and CF(0) - the membrane proton channel. CF(1) has five subunits: alpha(3), beta(3), gamma(1), delta(1), epsilon(1). CF(0) has four main subunits: a(1), b(1), b'(1) and c(9-12).

The protein resides in the plastid. The protein localises to the chloroplast thylakoid membrane. It carries out the reaction ATP + H2O + 4 H(+)(in) = ADP + phosphate + 5 H(+)(out). In terms of biological role, produces ATP from ADP in the presence of a proton gradient across the membrane. The catalytic sites are hosted primarily by the beta subunits. This chain is ATP synthase subunit beta, chloroplastic, found in Physcomitrium patens (Spreading-leaved earth moss).